Reading from the N-terminus, the 372-residue chain is Glutamate 5-kinase (372 aa).

ATP is bound at residue Lys14. Residues Ser54, Asp141, and Asn153 each contribute to the substrate site. Thr173 to Asp174 lines the ATP pocket. The PUA domain occupies Arg280–Met358.

It belongs to the glutamate 5-kinase family.

The protein resides in the cytoplasm. It carries out the reaction L-glutamate + ATP = L-glutamyl 5-phosphate + ADP. Its pathway is amino-acid biosynthesis; L-proline biosynthesis; L-glutamate 5-semialdehyde from L-glutamate: step 1/2. Catalyzes the transfer of a phosphate group to glutamate to form L-glutamate 5-phosphate. The sequence is that of Glutamate 5-kinase from Paraburkholderia phymatum (strain DSM 17167 / CIP 108236 / LMG 21445 / STM815) (Burkholderia phymatum).